The sequence spans 504 residues: ATP synthase subunit alpha, chloroplastic (504 aa).

170 to 177 lines the ATP pocket; sequence GDRQTGKT. At Thr-257 the chain carries Phosphothreonine.

Belongs to the ATPase alpha/beta chains family. F-type ATPases have 2 components, CF(1) - the catalytic core - and CF(0) - the membrane proton channel. CF(1) has five subunits: alpha(3), beta(3), gamma(1), delta(1), epsilon(1). CF(0) has four main subunits: a, b, b' and c.

It is found in the plastid. Its subcellular location is the chloroplast thylakoid membrane. It carries out the reaction ATP + H2O + 4 H(+)(in) = ADP + phosphate + 5 H(+)(out). Functionally, produces ATP from ADP in the presence of a proton gradient across the membrane. The alpha chain is a regulatory subunit. This is ATP synthase subunit alpha, chloroplastic from Nasturtium officinale (Watercress).